Consider the following 301-residue polypeptide: MKTKAGFVALIGKPNAGKSTLLNTLLNAHLALVSHKANATRKLMKCIVPFKDKEGYESQIIFLDTPGLHHQEKLLNQCMLSQALKAMGDAELCVFLASVHDDLKGYEEFLSLCQKPHILALSKIDTATHKQVLQKLQEYQQYDSQFLALVPLSAKKSQNLNALLECISKHLNPSAWLFEKDLMSDEKMRDIYKEIIRESLFDFLSDEIPYESDVMIDKFIEEERIDKVYARIIVEKESQKKIVIGKNGVNIKRIGTSARLKMQEVGEKKVFLNLQVIAQKSWSKEEKSLQKLGYTHQRNRD.

An Era-type G domain is found at 4–173 (KAGFVALIGK…LECISKHLNP (170 aa)). The segment at 12–19 (GKPNAGKS) is G1. 12–19 (GKPNAGKS) is a GTP binding site. Positions 38–42 (NATRK) are G2. The tract at residues 64–67 (DTPG) is G3. Residues 64–68 (DTPGL) and 122–125 (SKID) contribute to the GTP site. Residues 122–125 (SKID) are G4. A G5 region spans residues 152–154 (LSA). Positions 204-280 (LSDEIPYESD…FLNLQVIAQK (77 aa)) constitute a KH type-2 domain.

Belongs to the TRAFAC class TrmE-Era-EngA-EngB-Septin-like GTPase superfamily. Era GTPase family. As to quaternary structure, monomer.

It localises to the cytoplasm. The protein resides in the cell inner membrane. Its function is as follows. An essential GTPase that binds both GDP and GTP, with rapid nucleotide exchange. Plays a role in 16S rRNA processing and 30S ribosomal subunit biogenesis and possibly also in cell cycle regulation and energy metabolism. In Helicobacter pylori (strain P12), this protein is GTPase Era.